We begin with the raw amino-acid sequence, 448 residues long: Probable glycine dehydrogenase (decarboxylating) subunit 1 (448 aa).

It belongs to the GcvP family. N-terminal subunit subfamily. The glycine cleavage system is composed of four proteins: P, T, L and H. In this organism, the P 'protein' is a heterodimer of two subunits.

It carries out the reaction N(6)-[(R)-lipoyl]-L-lysyl-[glycine-cleavage complex H protein] + glycine + H(+) = N(6)-[(R)-S(8)-aminomethyldihydrolipoyl]-L-lysyl-[glycine-cleavage complex H protein] + CO2. Functionally, the glycine cleavage system catalyzes the degradation of glycine. The P protein binds the alpha-amino group of glycine through its pyridoxal phosphate cofactor; CO(2) is released and the remaining methylamine moiety is then transferred to the lipoamide cofactor of the H protein. In Bacillus subtilis (strain 168), this protein is Probable glycine dehydrogenase (decarboxylating) subunit 1 (gcvPA).